A 303-amino-acid polypeptide reads, in one-letter code: Putative ankyrin repeat protein R601 (303 aa).

ANK repeat units lie at residues 86-115, 117-146, 147-176, and 200-233; these read DDNM…DVTV, NNFA…DITV, DNYF…NVDS, and NADV…DVSY.

This is Putative ankyrin repeat protein R601 from Acanthamoeba polyphaga (Amoeba).